The sequence spans 430 residues: Lipoyl synthase, chloroplastic (430 aa).

Positions 1–16 (MRSLATLHQSPASCSR) are enriched in polar residues. The transit peptide at 1-40 (MRSLATLHQSPASCSRSAPVAPCPARRANSSRRVARQGPR) directs the protein to the chloroplast. Disordered stretches follow at residues 1–55 (MRSL…SEDV) and 85–119 (HLRS…SLGA). Positions 91–119 (KSAAPVSPFAAPSPGSPSASSMLGPSLGA) are enriched in low complexity. Cysteine 155, cysteine 160, cysteine 166, cysteine 183, cysteine 187, cysteine 190, and serine 397 together coordinate [4Fe-4S] cluster. Positions 166–386 (CWNGELATAT…KFGQEEIGFR (221 aa)) constitute a Radical SAM core domain.

Belongs to the radical SAM superfamily. Lipoyl synthase family. [4Fe-4S] cluster serves as cofactor.

The protein localises to the plastid. The protein resides in the chloroplast. The enzyme catalyses [[Fe-S] cluster scaffold protein carrying a second [4Fe-4S](2+) cluster] + N(6)-octanoyl-L-lysyl-[protein] + 2 oxidized [2Fe-2S]-[ferredoxin] + 2 S-adenosyl-L-methionine + 4 H(+) = [[Fe-S] cluster scaffold protein] + N(6)-[(R)-dihydrolipoyl]-L-lysyl-[protein] + 4 Fe(3+) + 2 hydrogen sulfide + 2 5'-deoxyadenosine + 2 L-methionine + 2 reduced [2Fe-2S]-[ferredoxin]. It functions in the pathway protein modification; protein lipoylation via endogenous pathway; protein N(6)-(lipoyl)lysine from octanoyl-[acyl-carrier-protein]: step 2/2. Functionally, catalyzes the radical-mediated insertion of two sulfur atoms into the C-6 and C-8 positions of the octanoyl moiety bound to the lipoyl domains of lipoate-dependent enzymes, thereby converting the octanoylated domains into lipoylated derivatives. The protein is Lipoyl synthase, chloroplastic of Chlamydomonas reinhardtii (Chlamydomonas smithii).